A 475-amino-acid polypeptide reads, in one-letter code: Ribosomal RNA small subunit methyltransferase F (475 aa).

S-adenosyl-L-methionine-binding positions include 125–131, Glu149, Asp176, and Asp194; that span reads AAAPGSK. Cys247 acts as the Nucleophile in catalysis.

This sequence belongs to the class I-like SAM-binding methyltransferase superfamily. RsmB/NOP family.

Its subcellular location is the cytoplasm. It catalyses the reaction cytidine(1407) in 16S rRNA + S-adenosyl-L-methionine = 5-methylcytidine(1407) in 16S rRNA + S-adenosyl-L-homocysteine + H(+). In terms of biological role, specifically methylates the cytosine at position 1407 (m5C1407) of 16S rRNA. The sequence is that of Ribosomal RNA small subunit methyltransferase F from Aeromonas hydrophila subsp. hydrophila (strain ATCC 7966 / DSM 30187 / BCRC 13018 / CCUG 14551 / JCM 1027 / KCTC 2358 / NCIMB 9240 / NCTC 8049).